Here is an 848-residue protein sequence, read N- to C-terminus: Neprilysin-11 (848 aa).

The Cytoplasmic segment spans residues 1–74; that stretch reads MPFGNDPPDY…WWKSRTTMEK (74 aa). A helical; Signal-anchor for type II membrane protein transmembrane segment spans residues 75–95; it reads LLLPVLLLFCLLTAVLLAVII. At 96–848 the chain is on the extracellular side; the sequence is NTDKRIEAMK…VNPDHKCIVW (753 aa). Residues 108–161 form a disordered region; it reads HATQTEHAGFGDPTENPTKTAEDPRVPPIVPEAPTSPEPEVTTSTEKPKEPEVC. A compositionally biased stretch (pro residues) spans 133–144; it reads VPPIVPEAPTSP. The 689-residue stretch at 160–848 folds into the Peptidase M13 domain; sequence VCSTPGCVRA…VNPDHKCIVW (689 aa). Cys161 and Cys166 are disulfide-bonded. N-linked (GlcNAc...) asparagine glycans are attached at residues Asn178, Asn249, Asn284, Asn312, Asn337, Asn364, Asn398, and Asn438. Cystine bridges form between Cys184–Cys833, Cys192–Cys793, Cys247–Cys509, and Cys719–Cys845. His682 serves as a coordination point for Zn(2+). Glu683 is a catalytic residue. Residue His686 participates in Zn(2+) binding. N-linked (GlcNAc...) asparagine glycosylation occurs at Asn726. Zn(2+) is bound at residue Glu744. The active-site Proton donor is the Asp748.

It belongs to the peptidase M13 family. Zn(2+) is required as a cofactor.

The protein localises to the cell membrane. In terms of biological role, probable cell surface protease. In Caenorhabditis elegans, this protein is Neprilysin-11 (nep-11).